A 481-amino-acid polypeptide reads, in one-letter code: Cobyric acid synthase (481 aa).

The region spanning 248–435 (ALTVAWLAFS…LHGMFGADGF (188 aa)) is the GATase cobBQ-type domain. The active-site Nucleophile is cysteine 330. The active site involves histidine 427.

The protein belongs to the CobB/CobQ family. CobQ subfamily.

Its pathway is cofactor biosynthesis; adenosylcobalamin biosynthesis. Its function is as follows. Catalyzes amidations at positions B, D, E, and G on adenosylcobyrinic A,C-diamide. NH(2) groups are provided by glutamine, and one molecule of ATP is hydrogenolyzed for each amidation. This is Cobyric acid synthase from Cereibacter sphaeroides (strain ATCC 17023 / DSM 158 / JCM 6121 / CCUG 31486 / LMG 2827 / NBRC 12203 / NCIMB 8253 / ATH 2.4.1.) (Rhodobacter sphaeroides).